Consider the following 402-residue polypeptide: tRNA(Met) cytidine acetate ligase (402 aa).

Residues 7-20, glycine 102, asparagine 171, and arginine 196 contribute to the ATP site; that span reads IAEY…HIHH.

Belongs to the TmcAL family.

The protein resides in the cytoplasm. It catalyses the reaction cytidine(34) in elongator tRNA(Met) + acetate + ATP = N(4)-acetylcytidine(34) in elongator tRNA(Met) + AMP + diphosphate. In terms of biological role, catalyzes the formation of N(4)-acetylcytidine (ac(4)C) at the wobble position of elongator tRNA(Met), using acetate and ATP as substrates. First activates an acetate ion to form acetyladenylate (Ac-AMP) and then transfers the acetyl group to tRNA to form ac(4)C34. This chain is tRNA(Met) cytidine acetate ligase, found in Clostridium acetobutylicum (strain ATCC 824 / DSM 792 / JCM 1419 / IAM 19013 / LMG 5710 / NBRC 13948 / NRRL B-527 / VKM B-1787 / 2291 / W).